The following is a 642-amino-acid chain: Ribosome biogenesis protein BOP1 homolog (642 aa).

The interval M1 to D28 is disordered. A compositionally biased stretch (basic and acidic residues) spans E10–D20. WD repeat units follow at residues G311–T351, S353–R393, R472–K510, T513–K552, H556–K595, and K612–T642.

Belongs to the WD repeat BOP1/ERB1 family.

It localises to the nucleus. The protein localises to the nucleolus. The protein resides in the nucleoplasm. Functionally, required for maturation of ribosomal RNAs and formation of the large ribosomal subunit. The polypeptide is Ribosome biogenesis protein BOP1 homolog (Brugia malayi (Filarial nematode worm)).